A 508-amino-acid chain; its full sequence is Nucleolar complex protein 4 homolog (508 aa).

3 helical membrane passes run 288–308 (VAYG…FILI), 341–361 (HLAD…AAFI), and 367–387 (LALT…CNLF).

This sequence belongs to the CBF/MAK21 family.

The protein localises to the nucleus membrane. The protein resides in the nucleus. It is found in the nucleolus. The protein is Nucleolar complex protein 4 homolog (NOC4L) of Gallus gallus (Chicken).